The primary structure comprises 2715 residues: Cilia- and flagella-associated protein 46 (2715 aa).

10 TPR repeats span residues 89–122 (CRAQ…AKGE), 175–208 (AELM…IKSH), 261–295 (GDIS…LLFE), 324–359 (PGKL…AQLD), 426–459 (CQVH…DSLG), 469–503 (STRL…TPKD), 807–845 (SRKF…TNGS), 936–969 (LQTL…GIKY), 1111–1144 (AALY…LPRT), and 1174–1211 (AESE…LQKP). The interval 1356-1412 (SHLLLPKKEKENERSKEKEKERSKEKENERSKEKDKEKGKEEKVKEPKQSQSPAPIK) is disordered. A compositionally biased stretch (basic and acidic residues) spans 1361 to 1403 (PKKEKENERSKEKEKERSKEKENERSKEKDKEKGKEEKVKEPK). Positions 1362 to 1401 (KKEKENERSKEKEKERSKEKENERSKEKDKEKGKEEKVKE) form a coiled coil. A TPR 11 repeat occupies 1639–1672 (AQCLLLLAQLANKEKNYGQAKKMIAQAQHLGGSE). Residues 1781-1810 (VDVKLERAKIKRLRAQNEKDEEQKTAYYLE) are a coiled coil. 3 disordered regions span residues 2000-2023 (EEEG…EHCR), 2294-2319 (AVVA…HSTV), and 2371-2399 (ETEG…KGSI). Composition is skewed to basic and acidic residues over residues 2300–2311 (GKSKGKDKERKT) and 2371–2383 (ETEG…GRSR). A compositionally biased stretch (basic residues) spans 2384–2398 (DPKKRSLAKKGRKGS). TPR repeat units lie at residues 2399–2432 (IPRT…EMLT) and 2504–2537 (VAVL…EANW). The segment at 2541–2567 (ASPSEDEWRRGGEPRRGFSDLEGQAAA) is disordered. Residues 2546-2559 (DEWRRGGEPRRGFS) show a composition bias toward basic and acidic residues.

This sequence belongs to the CFAP46 family.

The protein resides in the cytoplasm. It is found in the cytoskeleton. It localises to the cilium axoneme. Its function is as follows. As part of the central apparatus of the cilium axoneme plays a role in cilium movement. This is Cilia- and flagella-associated protein 46 from Homo sapiens (Human).